A 282-amino-acid polypeptide reads, in one-letter code: Pantothenate synthetase (282 aa).

30-37 serves as a coordination point for ATP; the sequence is MGNLHEGH. The active-site Proton donor is H37. Q61 is a (R)-pantoate binding site. Residue Q61 participates in beta-alanine binding. 148 to 151 provides a ligand contact to ATP; sequence GQKD. Q154 contributes to the (R)-pantoate binding site. ATP is bound by residues V177 and 185–188; that span reads LSSR.

The protein belongs to the pantothenate synthetase family. As to quaternary structure, homodimer.

The protein resides in the cytoplasm. It catalyses the reaction (R)-pantoate + beta-alanine + ATP = (R)-pantothenate + AMP + diphosphate + H(+). It functions in the pathway cofactor biosynthesis; (R)-pantothenate biosynthesis; (R)-pantothenate from (R)-pantoate and beta-alanine: step 1/1. Functionally, catalyzes the condensation of pantoate with beta-alanine in an ATP-dependent reaction via a pantoyl-adenylate intermediate. The chain is Pantothenate synthetase from Acinetobacter baumannii (strain AB0057).